The sequence spans 424 residues: Arginine biosynthesis bifunctional protein ArgJ (424 aa).

Substrate-binding residues include T172, K198, T209, E296, N419, and S424. The active-site Nucleophile is the T209.

The protein belongs to the ArgJ family. As to quaternary structure, heterotetramer of two alpha and two beta chains.

The protein localises to the cytoplasm. The enzyme catalyses N(2)-acetyl-L-ornithine + L-glutamate = N-acetyl-L-glutamate + L-ornithine. It carries out the reaction L-glutamate + acetyl-CoA = N-acetyl-L-glutamate + CoA + H(+). It participates in amino-acid biosynthesis; L-arginine biosynthesis; L-ornithine and N-acetyl-L-glutamate from L-glutamate and N(2)-acetyl-L-ornithine (cyclic): step 1/1. The protein operates within amino-acid biosynthesis; L-arginine biosynthesis; N(2)-acetyl-L-ornithine from L-glutamate: step 1/4. Its function is as follows. Catalyzes two activities which are involved in the cyclic version of arginine biosynthesis: the synthesis of N-acetylglutamate from glutamate and acetyl-CoA as the acetyl donor, and of ornithine by transacetylation between N(2)-acetylornithine and glutamate. The protein is Arginine biosynthesis bifunctional protein ArgJ of Gluconobacter oxydans (strain 621H) (Gluconobacter suboxydans).